The chain runs to 191 residues: CASP-like protein 4C2 (191 aa).

Over M1–D29 the chain is Cytoplasmic. Residues A30–M50 form a helical membrane-spanning segment. At G51–R72 the chain is on the extracellular side. A helical membrane pass occupies residues Y73–V93. The Cytoplasmic segment spans residues Y94–D116. Residues Q117–L137 traverse the membrane as a helical segment. The Extracellular segment spans residues Q138 to R161. A helical transmembrane segment spans residues V162 to G182. Residues L183 to R191 lie on the Cytoplasmic side of the membrane.

Belongs to the Casparian strip membrane proteins (CASP) family. As to quaternary structure, homodimer and heterodimers.

The protein resides in the cell membrane. The sequence is that of CASP-like protein 4C2 from Physcomitrium patens (Spreading-leaved earth moss).